A 264-amino-acid polypeptide reads, in one-letter code: Glutamate 5-kinase (264 aa).

Lysine 15 lines the ATP pocket. Residues serine 55, aspartate 142, and asparagine 154 each coordinate substrate. Residues 174–175 and 216–222 each bind ATP; these read SD and TGGIATK.

It belongs to the glutamate 5-kinase family.

The protein resides in the cytoplasm. The enzyme catalyses L-glutamate + ATP = L-glutamyl 5-phosphate + ADP. The protein operates within amino-acid biosynthesis; L-proline biosynthesis; L-glutamate 5-semialdehyde from L-glutamate: step 1/2. Functionally, catalyzes the transfer of a phosphate group to glutamate to form L-glutamate 5-phosphate. In Alkaliphilus metalliredigens (strain QYMF), this protein is Glutamate 5-kinase.